The chain runs to 857 residues: DNA mismatch repair protein MutS (857 aa).

613–620 (GPNMGGKS) serves as a coordination point for ATP. A disordered region spans residues 797–820 (TSLPHEQPAAHKAKDAPQVPHQSD).

This sequence belongs to the DNA mismatch repair MutS family.

This protein is involved in the repair of mismatches in DNA. It is possible that it carries out the mismatch recognition step. This protein has a weak ATPase activity. This is DNA mismatch repair protein MutS from Pseudomonas putida (strain ATCC 47054 / DSM 6125 / CFBP 8728 / NCIMB 11950 / KT2440).